An 80-amino-acid polypeptide reads, in one-letter code: Putative defensin-like protein 23 (80 aa).

The signal sequence occupies residues 1 to 25; that stretch reads MTTTMKIMSFAMLLVLLFSIDVVEG. Intrachain disulfides connect Cys-31-Cys-80, Cys-41-Cys-66, Cys-50-Cys-76, and Cys-54-Cys-78.

The protein belongs to the DEFL family.

It is found in the secreted. This is Putative defensin-like protein 23 from Arabidopsis thaliana (Mouse-ear cress).